The sequence spans 467 residues: Gamma-aminobutyric acid receptor subunit gamma-2 (467 aa).

Residues 1-39 (MSSPNIWSTGSSVYSTPVFSQKMTVWILLLLSLYPGFTS) form the signal peptide. At 40-275 (QKSDDDYEDY…FDLSRRMGYF (236 aa)) the chain is on the extracellular side. Residues asparagine 52 and asparagine 129 are each glycosylated (N-linked (GlcNAc...) asparagine). A disulfide bridge links cysteine 190 with cysteine 204. A glycan (N-linked (GlcNAc...) asparagine) is linked at asparagine 247. Residues 276–296 (TIQTYIPCTLIVVLSWVSFWI) traverse the membrane as a helical segment. The Cytoplasmic segment spans residues 297–302 (NKDAVP). A helical transmembrane segment spans residues 303-322 (ARTSLGITTVLTMTTLSTIA). The Extracellular portion of the chain corresponds to 323-334 (RKSLPKVSYVTA). A helical membrane pass occupies residues 335–359 (MDLFVSVCFIFVFSALVEYGTLHYF). Residues 360-443 (VSNRKPSKDK…IHIRIAKMDS (84 aa)) lie on the Cytoplasmic side of the membrane. The interval 425–442 (RTGAWRHGRIHIRIAKMD) is interaction with GABARAP. Residues 444–464 (YARIFFPTAFCLFNLVYWVSY) form a helical membrane-spanning segment. Topologically, residues 465–467 (LYL) are extracellular.

The protein belongs to the ligand-gated ion channel (TC 1.A.9) family. Gamma-aminobutyric acid receptor (TC 1.A.9.5) subfamily. GABRG2 sub-subfamily. Heteropentamer, formed by a combination of alpha (GABRA1-6), beta (GABRB1-3), gamma (GABRG1-3), delta (GABRD), epsilon (GABRE), rho (GABRR1-3), pi (GABRP) and theta (GABRQ) chains, each subunit exhibiting distinct physiological and pharmacological properties. Interacts with GABARAP. Interacts with KIF21B. Identified in a complex of 720 kDa composed of LHFPL4, NLGN2, GABRA1, GABRB2, GABRG2 and GABRB3. Interacts with LHFPL4. Interacts with SHISA7; interaction leads to the regulation of GABA(A) receptor trafficking, channel deactivation kinetics and pharmacology. Palmitoylated by ZDHHC3/GODZ; required for the accumulation of GABA(A) receptors at the postsynaptic membrane of inhibitory GABAergic synapses. Post-translationally, glycosylated.

The protein localises to the postsynaptic cell membrane. The protein resides in the cell membrane. Its subcellular location is the cell projection. It localises to the dendrite. It is found in the cytoplasmic vesicle membrane. It catalyses the reaction chloride(in) = chloride(out). With respect to regulation, allosterically activated by benzodiazepines. Activated by pentobarbital. Inhibited by the antagonist bicuculline. Inhibited by zinc ions. Potentiated by histamine. Gamma subunit of the heteropentameric ligand-gated chloride channel gated by gamma-aminobutyric acid (GABA), a major inhibitory neurotransmitter in the brain. GABA-gated chloride channels, also named GABA(A) receptors (GABAAR), consist of five subunits arranged around a central pore and contain GABA active binding site(s) located at the alpha and beta subunit interface(s). When activated by GABA, GABAARs selectively allow the flow of chloride anions across the cell membrane down their electrochemical gradient. Gamma-2/GABRG2-containing GABAARs are found at both synaptic and extrasynaptic sites. Chloride influx into the postsynaptic neuron following GABAAR opening decreases the neuron ability to generate a new action potential, thereby reducing nerve transmission. GABAARs containing alpha-1 and beta-2 or -3 subunits exhibit synaptogenic activity; the gamma-2 subunit being necessary but not sufficient to induce rapid synaptic contacts formation. Extrasynaptic gamma-2-containing receptors contribute to the tonic GABAergic inhibition. GABAARs function also as histamine receptor where histamine binds at the interface of two neighboring beta subunits and potentiates GABA response in a gamma-2 subunit-controlled manner. This is Gamma-aminobutyric acid receptor subunit gamma-2 (GABRG2) from Pongo abelii (Sumatran orangutan).